Consider the following 304-residue polypeptide: Acetaldehyde dehydrogenase 1 (304 aa).

11–14 (SGNI) contacts NAD(+). Residue C130 is the Acyl-thioester intermediate of the active site. NAD(+)-binding positions include 161–169 (SVGPGTRAN) and N272.

This sequence belongs to the acetaldehyde dehydrogenase family.

It carries out the reaction acetaldehyde + NAD(+) + CoA = acetyl-CoA + NADH + H(+). The polypeptide is Acetaldehyde dehydrogenase 1 (lapF) (Azoarcus sp. (strain BH72)).